Consider the following 1228-residue polypeptide: Ribosomal RNA-processing protein 12 (1228 aa).

Phosphoserine occurs at positions 1059 and 1067. The segment at 1168–1228 (GPVRGQRNKL…GPKFKSRKKL (61 aa)) is disordered. Over residues 1212-1228 (IGKHNKKGPKFKSRKKL) the composition is skewed to basic residues.

Belongs to the RRP12 family. Interacts with GSP1.

It localises to the cytoplasm. The protein localises to the nucleus. It is found in the nucleolus. In association with GSP1, required for nuclear export of both pre-40S and pre-60S ribosomal subunits. Required for the late maturation of the 18S and 5.8S rRNA of the pre-40S ribosomes and for maturation of the 25S and 5.8S rRNA of the pre-60S ribosomes. The polypeptide is Ribosomal RNA-processing protein 12 (RRP12) (Saccharomyces cerevisiae (strain ATCC 204508 / S288c) (Baker's yeast)).